Here is a 275-residue protein sequence, read N- to C-terminus: Dermonecrotic toxin LhSicTox-alphaVI1i (275 aa).

Residue H5 is part of the active site. Mg(2+)-binding residues include E25 and D27. H41 serves as the catalytic Nucleophile. Intrachain disulfides connect C45–C51 and C47–C192. Residue D85 participates in Mg(2+) binding.

The protein belongs to the arthropod phospholipase D family. Class II subfamily. Mg(2+) is required as a cofactor. As to expression, expressed by the venom gland.

The protein localises to the secreted. It carries out the reaction an N-(acyl)-sphingosylphosphocholine = an N-(acyl)-sphingosyl-1,3-cyclic phosphate + choline. The catalysed reaction is an N-(acyl)-sphingosylphosphoethanolamine = an N-(acyl)-sphingosyl-1,3-cyclic phosphate + ethanolamine. It catalyses the reaction a 1-acyl-sn-glycero-3-phosphocholine = a 1-acyl-sn-glycero-2,3-cyclic phosphate + choline. The enzyme catalyses a 1-acyl-sn-glycero-3-phosphoethanolamine = a 1-acyl-sn-glycero-2,3-cyclic phosphate + ethanolamine. Its function is as follows. Dermonecrotic toxins cleave the phosphodiester linkage between the phosphate and headgroup of certain phospholipids (sphingolipid and lysolipid substrates), forming an alcohol (often choline) and a cyclic phosphate. This toxin acts on sphingomyelin (SM). It may also act on ceramide phosphoethanolamine (CPE), lysophosphatidylcholine (LPC) and lysophosphatidylethanolamine (LPE), but not on lysophosphatidylserine (LPS), and lysophosphatidylglycerol (LPG). It acts by transphosphatidylation, releasing exclusively cyclic phosphate products as second products. Induces dermonecrosis, hemolysis, increased vascular permeability, edema, inflammatory response, and platelet aggregation. In Loxosceles hirsuta (Recluse spider), this protein is Dermonecrotic toxin LhSicTox-alphaVI1i.